The following is a 305-amino-acid chain: Superkiller complex protein 8 (305 aa).

Met1 is modified (N-acetylmethionine). Thr2 is modified (N-acetylthreonine; in WD repeat-containing protein 61, N-terminally processed). WD repeat units follow at residues 14–57 (AHDD…LELQ), 62–101 (GHQL…QMKS), 104–143 (AGPV…KEYS), 146–187 (TRGK…HTLE), 188–227 (GHAM…LAGT), 230–269 (GHAS…CIHT), and 272–305 (DHQD…DCPI).

This sequence belongs to the SKI8 family. In terms of assembly, component of the PAF1 complex, which consists of CDC73, PAF1, LEO1, CTR9, RTF1 and SKIC8. The PAF1 complex interacts with PHF5A. Within the PAF1 complex interacts directly with PHF5A. Component of the SKI complex which consists of SKIC2, SKIC3 and SKIC8.

The protein localises to the nucleus. It is found in the cytoplasm. Functionally, component of the PAF1 complex (PAF1C) which has multiple functions during transcription by RNA polymerase II and is implicated in regulation of development and maintenance of embryonic stem cell pluripotency. PAF1C associates with RNA polymerase II through interaction with POLR2A CTD non-phosphorylated and 'Ser-2'- and 'Ser-5'-phosphorylated forms and is involved in transcriptional elongation, acting both independently and synergistically with TCEA1 and in cooperation with the DSIF complex and HTATSF1. PAF1C is required for transcription of Hox and Wnt target genes. PAF1C is involved in hematopoiesis and stimulates transcriptional activity of KMT2A/MLL1; it promotes leukemogenesis through association with KMT2A/MLL1-rearranged oncoproteins, such as KMT2A/MLL1-MLLT3/AF9 and KMT2A/MLL1-MLLT1/ENL. PAF1C is involved in histone modifications such as ubiquitination of histone H2B and methylation on histone H3 'Lys-4' (H3K4me3). PAF1C recruits the RNF20/40 E3 ubiquitin-protein ligase complex and the E2 enzyme UBE2A or UBE2B to chromatin which mediate monoubiquitination of 'Lys-120' of histone H2B (H2BK120ub1); UB2A/B-mediated H2B ubiquitination is proposed to be coupled to transcription. PAF1C is involved in mRNA 3' end formation probably through association with cleavage and poly(A) factors. In case of infection by influenza A strain H3N2, PAF1C associates with viral NS1 protein, thereby regulating gene transcription. Required for mono- and trimethylation on histone H3 'Lys-4' (H3K4me3), dimethylation on histone H3 'Lys-79' (H3K4me3). Required for Hox gene transcription. Also acts as a component of the SKI complex, a multiprotein complex that assists the RNA-degrading exosome during the mRNA decay and quality-control pathways. The SKI complex catalyzes mRNA extraction from 80S ribosomal complexes in the 3'-5' direction and channels mRNA to the cytosolic exosome for degradation. SKI-mediated extraction of mRNA from stalled ribosomes allow binding of the Pelota-HBS1L complex and subsequent ribosome disassembly by ABCE1 for ribosome recycling. This is Superkiller complex protein 8 (Skic8) from Mus musculus (Mouse).